The chain runs to 382 residues: 1-deoxy-D-xylulose 5-phosphate reductoisomerase (382 aa).

S10, G11, S12, I13, G36, K37, N38, and N121 together coordinate NADPH. K122 contributes to the 1-deoxy-D-xylulose 5-phosphate binding site. Residue E123 participates in NADPH binding. D147 contacts Mn(2+). The 1-deoxy-D-xylulose 5-phosphate site is built by S148, E149, S173, and H196. A Mn(2+)-binding site is contributed by E149. G202 contributes to the NADPH binding site. 1-deoxy-D-xylulose 5-phosphate contacts are provided by S209, N214, K215, and E218. A Mn(2+)-binding site is contributed by E218.

It belongs to the DXR family. Mg(2+) serves as cofactor. Requires Mn(2+) as cofactor.

The enzyme catalyses 2-C-methyl-D-erythritol 4-phosphate + NADP(+) = 1-deoxy-D-xylulose 5-phosphate + NADPH + H(+). Its pathway is isoprenoid biosynthesis; isopentenyl diphosphate biosynthesis via DXP pathway; isopentenyl diphosphate from 1-deoxy-D-xylulose 5-phosphate: step 1/6. In terms of biological role, catalyzes the NADPH-dependent rearrangement and reduction of 1-deoxy-D-xylulose-5-phosphate (DXP) to 2-C-methyl-D-erythritol 4-phosphate (MEP). This Geobacillus kaustophilus (strain HTA426) protein is 1-deoxy-D-xylulose 5-phosphate reductoisomerase.